A 234-amino-acid polypeptide reads, in one-letter code: Segregation and condensation protein A (234 aa).

This sequence belongs to the ScpA family. Component of a cohesin-like complex composed of ScpA, ScpB and the Smc homodimer, in which ScpA and ScpB bind to the head domain of Smc. The presence of the three proteins is required for the association of the complex with DNA.

It localises to the cytoplasm. Functionally, participates in chromosomal partition during cell division. May act via the formation of a condensin-like complex containing Smc and ScpB that pull DNA away from mid-cell into both cell halves. In Streptococcus pyogenes serotype M18 (strain MGAS8232), this protein is Segregation and condensation protein A.